Reading from the N-terminus, the 440-residue chain is Xylose isomerase (440 aa).

Residues His-100 and Asp-103 contribute to the active site. The Mg(2+) site is built by Glu-231, Glu-267, His-270, Asp-295, Asp-306, Asp-308, and Asp-338.

It belongs to the xylose isomerase family. Homotetramer. The cofactor is Mg(2+).

It is found in the cytoplasm. It carries out the reaction alpha-D-xylose = alpha-D-xylulofuranose. This Paraburkholderia phytofirmans (strain DSM 17436 / LMG 22146 / PsJN) (Burkholderia phytofirmans) protein is Xylose isomerase.